A 310-amino-acid chain; its full sequence is NADP-dependent D-sorbitol-6-phosphate dehydrogenase (310 aa).

The active-site Proton donor is the tyrosine 48. Position 108 (histidine 108) interacts with substrate. An NADP(+)-binding site is contributed by 210–272 (TPLGGAAANK…SSKIQRLKEN (63 aa)).

Belongs to the aldo/keto reductase family.

The catalysed reaction is D-sorbitol 6-phosphate + NADP(+) = aldehydo-D-glucose 6-phosphate + NADPH + H(+). In terms of biological role, synthesizes sorbitol-6-phosphate, a key intermediate in the synthesis of sorbitol which is a major photosynthetic product in many members of the Rosaceae family. The polypeptide is NADP-dependent D-sorbitol-6-phosphate dehydrogenase (S6PDH) (Malus domestica (Apple)).